Reading from the N-terminus, the 146-residue chain is Hemoglobin subunit beta (146 aa).

An N-acetylvaline modification is found at Val-1. The Globin domain occupies 2-146 (HLSDGEKNAI…VANALAHKYH (145 aa)). Residue Ser-44 is modified to Phosphoserine. At Lys-59 the chain carries N6-acetyllysine. His-63 contacts heme b. An N6-acetyllysine modification is found at Lys-82. His-92 contacts heme b. Cys-93 bears the S-nitrosocysteine mark. Position 144 is an N6-acetyllysine (Lys-144).

The protein belongs to the globin family. Heterotetramer of two alpha chains and two beta chains. In terms of tissue distribution, red blood cells.

Functionally, involved in oxygen transport from the lung to the various peripheral tissues. This chain is Hemoglobin subunit beta (HBB), found in Spermophilus citellus (European ground squirrel).